Here is a 300-residue protein sequence, read N- to C-terminus: 2-keto-3-deoxy-L-fuconate dehydrogenase (300 aa).

Residues 63 to 90 (LITA…IATD) and D112 each bind NAD(+). Residue R198 participates in substrate binding. The active-site Proton acceptor is the Y201. Residues K205 and 234–238 (IKTPS) contribute to the NAD(+) site. Positions 242 and 260 each coordinate substrate.

This sequence belongs to the short-chain dehydrogenases/reductases (SDR) family.

In terms of biological role, plays a role in the catabolism of L-fucose. Catalyzes the NAD(+)-dependent oxidation of 2-keo-3-deoxy-L-fuconate to 2,4-diketo-3-deoxy-L-fuconate. The chain is 2-keto-3-deoxy-L-fuconate dehydrogenase from Xanthomonas campestris pv. campestris (strain ATCC 33913 / DSM 3586 / NCPPB 528 / LMG 568 / P 25).